Consider the following 898-residue polypeptide: Serine/threonine-protein kinase TAO3 (898 aa).

The Protein kinase domain occupies 24–277; the sequence is FIDLHEIGHG…AAELLRHDFI (254 aa). Residues 30 to 38 and K53 each bind ATP; that span reads IGHGSFGAV. D147 (proton acceptor) is an active-site residue. 2 disordered regions span residues 316 to 372 and 405 to 424; these read TRNG…EVMD and DEAG…SVQS. S324, S331, S343, S346, and S349 each carry phosphoserine. Positions 349–366 are enriched in low complexity; that stretch reads SIPSVSVSTGSRSSSVNS. T357 carries the post-translational modification Phosphothreonine. S359 carries the post-translational modification Phosphoserine. A compositionally biased stretch (basic and acidic residues) spans 405–416; the sequence is DEAGHGDPRPEP. S442 is subject to Phosphoserine. Coiled-coil stretches lie at residues 452–502, 548–649, and 753–871; these read EQEN…THAN, FLES…HAML, and ILKT…QERE. Positions 565 to 596 are disordered; the sequence is EEMNEDHSTPKKEKQERISKHKENLQHTQAEE. K830 carries the N6-acetyllysine modification.

It belongs to the protein kinase superfamily. STE Ser/Thr protein kinase family. STE20 subfamily. In terms of assembly, self-associates. Interacts with ERN1 and TRAF2. Interaction with TRAF2 is facilitated under ER stress conditions, such as treatment with tunicamycin, and may promote TRAF2 phosphorylation. Interacts (via N-terminus) with STK25; the interaction promotes STK25 abundance at the level of protein expression and/or stability. Post-translationally, autophosphorylated. Phosphorylation at Ser-324 by ATM following DNA damage is required for activation of the p38/MAPK14 stress-activated MAPK cascade. Phosphorylated at Ser-324 and on Tyr residues during T cell activation. Phosphorylated by LRRK2. In terms of tissue distribution, ubiquitously expressed, with a higher expression in the retina.

The protein resides in the cytoplasm. It localises to the cell membrane. The protein localises to the membrane raft. It is found in the lipid droplet. It carries out the reaction L-seryl-[protein] + ATP = O-phospho-L-seryl-[protein] + ADP + H(+). It catalyses the reaction L-threonyl-[protein] + ATP = O-phospho-L-threonyl-[protein] + ADP + H(+). Its function is as follows. Serine/threonine-protein kinase that acts as a regulator of the p38/MAPK14 stress-activated MAPK cascade and of the MAPK8/JNK cascade. In response to DNA damage, involved in the G2/M transition DNA damage checkpoint by activating the p38/MAPK14 stress-activated MAPK cascade, probably by mediating phosphorylation of upstream MAP2K3 and MAP2K6 kinases. Inhibits basal activity of the MAPK8/JNK cascade and diminishes its activation in response to epidermal growth factor (EGF). Positively regulates canonical T cell receptor (TCR) signaling by preventing early PTPN6/SHP1-mediated inactivation of LCK, ensuring sustained TCR signaling that is required for optimal activation and differentiation of T cells. Phosphorylates PTPN6/SHP1 on 'Thr-396', leading to its polyubiquitination and subsequent proteasomal degradation. Required for cell surface expression of metalloprotease ADAM10 on type 1 transitional B cells which is necessary for their NOTCH-mediated development into marginal zone B cells. Also required for the NOTCH-mediated terminal differentiation of splenic conventional type 2 dendritic cells. Positively regulates osteoblast differentiation by acting as an upstream activator of the JNK pathway. Promotes JNK signaling in hepatocytes and positively regulates hepatocyte lipid storage by inhibiting beta-oxidation and triacylglycerol secretion while enhancing lipid synthesis. Restricts age-associated inflammation by negatively regulating differentiation of macrophages and their production of pro-inflammatory cytokines. Plays a role in negatively regulating the abundance of regulatory T cells in white adipose tissue. The polypeptide is Serine/threonine-protein kinase TAO3 (Taok3) (Rattus norvegicus (Rat)).